The sequence spans 245 residues: MNVTLLIPARYGSSRFPGKPLAHINGKPMIQHVYERASLAKGLKDIYVATDDVRIKNAVESFGGKVVMTGENAASGTDRIDEAISILGLADDDLVINLQGDQPLIDPIVIEQLVSVCERHAGEFDMATLGVEIKDEAQLNDPNHVKVVFDNNHNALYFSRARIPFGRDTSDYPVYKHIGIYAYTRKFIQTFAKLPLGRLEELEKLEQLRALEYGYKIKVAISAFDFPEVDTPEDIRICEARLTVD.

It belongs to the KdsB family.

It localises to the cytoplasm. It catalyses the reaction 8-amino-3,8-dideoxy-alpha-D-manno-octulosonate + CTP = CMP-8-amino-3,8-dideoxy-alpha-D-manno-oct-2-ulosonate + diphosphate. It functions in the pathway bacterial outer membrane biogenesis; lipopolysaccharide biosynthesis. Functionally, activates KDO8N (a required 8-carbon sugar) for incorporation into bacterial lipopolysaccharide in the Shewanella genus. This chain is 8-amino-3,8-dideoxy-manno-octulosonate cytidylyltransferase, found in Shewanella pealeana (strain ATCC 700345 / ANG-SQ1).